The sequence spans 319 residues: Methionyl-tRNA formyltransferase (319 aa).

112–115 (SILP) is a binding site for (6S)-5,6,7,8-tetrahydrofolate.

It belongs to the Fmt family.

It carries out the reaction L-methionyl-tRNA(fMet) + (6R)-10-formyltetrahydrofolate = N-formyl-L-methionyl-tRNA(fMet) + (6S)-5,6,7,8-tetrahydrofolate + H(+). In terms of biological role, attaches a formyl group to the free amino group of methionyl-tRNA(fMet). The formyl group appears to play a dual role in the initiator identity of N-formylmethionyl-tRNA by promoting its recognition by IF2 and preventing the misappropriation of this tRNA by the elongation apparatus. This chain is Methionyl-tRNA formyltransferase, found in Shewanella denitrificans (strain OS217 / ATCC BAA-1090 / DSM 15013).